Reading from the N-terminus, the 226-residue chain is Ribose-5-phosphate isomerase A (226 aa).

Residues T29 to T32, D84 to D87, and K97 to G100 contribute to the substrate site. E106 serves as the catalytic Proton acceptor. K124 lines the substrate pocket.

It belongs to the ribose 5-phosphate isomerase family. In terms of assembly, homodimer.

The catalysed reaction is aldehydo-D-ribose 5-phosphate = D-ribulose 5-phosphate. Its pathway is carbohydrate degradation; pentose phosphate pathway; D-ribose 5-phosphate from D-ribulose 5-phosphate (non-oxidative stage): step 1/1. Its function is as follows. Catalyzes the reversible conversion of ribose-5-phosphate to ribulose 5-phosphate. The chain is Ribose-5-phosphate isomerase A from Methanothermobacter thermautotrophicus (strain ATCC 29096 / DSM 1053 / JCM 10044 / NBRC 100330 / Delta H) (Methanobacterium thermoautotrophicum).